We begin with the raw amino-acid sequence, 205 residues long: Meiotic nuclear division protein 1 homolog (205 aa).

Residue S2 is modified to N-acetylserine. Positions 83–173 form a coiled coil; that stretch reads KRKLEVLDSQ…EAANRWTDNI (91 aa).

It belongs to the MND1 family. As to quaternary structure, heterodimer with PSMC3IP/HOP2. MND1-PSMC3IP interacts with DMC1 and RAD51 and binds preferentially to dsDNA.

The protein localises to the nucleus. In terms of biological role, required for proper homologous chromosome pairing and efficient cross-over and intragenic recombination during meiosis. Stimulates both DMC1- and RAD51-mediated homologous strand assimilation, which is required for the resolution of meiotic double-strand breaks. This chain is Meiotic nuclear division protein 1 homolog, found in Bos taurus (Bovine).